Reading from the N-terminus, the 448-residue chain is Protein EVI2B (448 aa).

The first 21 residues, 1-21 (MDPKYFILILFCGHLNNTFFS), serve as a signal peptide directing secretion. Residues asparagine 16 and asparagine 50 are each glycosylated (N-linked (GlcNAc...) asparagine). The Extracellular portion of the chain corresponds to 22–202 (KTETITTEKQ…QTPQKNNYNS (181 aa)). Residues 74–108 (AKVTAGQPTPAVYTSSEKPEAHTSAGQPLAYNTKQ) are disordered. Over residues 97–108 (SAGQPLAYNTKQ) the composition is skewed to polar residues. N-linked (GlcNAc...) asparagine glycosylation is present at asparagine 114. A helical membrane pass occupies residues 203-226 (IAAILIGVLLTSMLVAIIIIVLWK). Residues 227–448 (CLRKPVLNDQ…SLPPPPAELL (222 aa)) lie on the Cytoplasmic side of the membrane. Threonine 249 carries the post-translational modification Phosphothreonine. A phosphoserine mark is found at serine 268, serine 271, serine 278, and serine 294. Disordered regions lie at residues 298–372 (IEDS…DSTS) and 427–448 (SIPPNSDQDLNESLPPPPAELL). Composition is skewed to polar residues over residues 313–333 (VNGTSEDSADGSTVGTAVSSS) and 350–372 (QESNQSDKPTMTIVSPLPNDSTS).

As to expression, bone marrow, peripheral blood mononuclear cells, fibroblasts and Epstein-Barr virus-transformed lymphoblastoid cell lines. Strongly expressed in granulocytic cells, and weakly on lymphocytes cells.

The protein resides in the membrane. Functionally, required for granulocyte differentiation and functionality of hematopoietic progenitor cells through the control of cell cycle progression and survival of hematopoietic progenitor cells. This is Protein EVI2B from Homo sapiens (Human).